The chain runs to 74 residues: Putative defensin-like protein 12 (74 aa).

An N-terminal signal peptide occupies residues 1–26; sequence MAKPCAAFLVFLCLSMLILSIPDISC. 3 disulfides stabilise this stretch: cysteine 26/cysteine 50, cysteine 33/cysteine 59, and cysteine 39/cysteine 61.

This sequence belongs to the DEFL family.

Its subcellular location is the secreted. The polypeptide is Putative defensin-like protein 12 (Arabidopsis thaliana (Mouse-ear cress)).